Here is a 162-residue protein sequence, read N- to C-terminus: Cytochrome c-type biogenesis protein CcmE (162 aa).

Residues 1 to 8 are Cytoplasmic-facing; sequence MNPRRKKR. Residues 9–29 traverse the membrane as a helical; Signal-anchor for type II membrane protein segment; sequence LALVVGLIGGVAAVASLLLYA. Over 30-162 the chain is Periplasmic; that stretch reads LNTNLNLFYT…YTETQKGGSR (133 aa). Residues histidine 131 and tyrosine 135 each contribute to the heme site.

Belongs to the CcmE/CycJ family.

It is found in the cell inner membrane. Heme chaperone required for the biogenesis of c-type cytochromes. Transiently binds heme delivered by CcmC and transfers the heme to apo-cytochromes in a process facilitated by CcmF and CcmH. In Shewanella amazonensis (strain ATCC BAA-1098 / SB2B), this protein is Cytochrome c-type biogenesis protein CcmE.